Reading from the N-terminus, the 273-residue chain is DnaJ homolog subfamily C member 27-A (273 aa).

GTP is bound by residues 23–30, 71–75, and 134–137; these read GNAEVGKS, DMAGH, and NKID. The region spanning 217-273 is the J domain; it reads DSWDMLGVKPGATRDEVNKAYRKLAVLLHPDKCMAPGSEDAFKAVVNARTALLKNIK.

The protein belongs to the small GTPase superfamily. Rab family.

The protein resides in the nucleus. Functionally, GTPase possibly involved in regulation of the MEK/ERK pathway. In Xenopus laevis (African clawed frog), this protein is DnaJ homolog subfamily C member 27-A (dnajc27-a).